The chain runs to 977 residues: Short transient receptor potential channel 4 (977 aa).

The Cytoplasmic segment spans residues 1–324 (MAQFYYKRNV…YDEFPGWRRR (324 aa)). ANK repeat units lie at residues 29–60 (LSPS…IYFK), 71–93 (RTAL…LSFN), 96–118 (VGDA…LLNH), and 141–165 (PDIT…VQKG). Residues histidine 172, cysteine 176, cysteine 178, and cysteine 181 each contribute to the Zn(2+) site. The stretch at 223-260 (LSWELQELSKVENEFKSEYEELSRQCKQFAKDLLDQTR) forms a coiled coil. The segment at residues 325–359 (HWAVKMVTCFIIGLLFPVFSVCYLIAPKSPLGLFI) is an intramembrane region (discontinuously helical). Topologically, residues 360-362 (RKP) are cytoplasmic. The helical transmembrane segment at 363–383 (FIKFICHTASYLTFLFLLLLA) threads the bilayer. At 384-403 (SQHIDRSDLNRQGPPPTIVE) the chain is on the extracellular side. Residues 404 to 418 (WMILPWVLGFIWGEI) form a helical membrane-spanning segment. Residues glutamate 417, glutamine 420, asparagine 435, and aspartate 438 each contribute to the Ca(2+) site. The Cytoplasmic portion of the chain corresponds to 419–432 (KQMWDGGLQDYIHD). Residues 433-453 (WWNLMDFVMNSLYLATISLKI) form a helical membrane-spanning segment. At 454–475 (VAFVKYSALNPRESWDMWHPTL) the chain is on the extracellular side. The helical transmembrane segment at 476–498 (VAEALFAIANIFSSLRLISLFTA) threads the bilayer. Residues 499–511 (NSHLGPLQISLGR) lie on the Cytoplasmic side of the membrane. A helical transmembrane segment spans residues 512 to 534 (MLLDILKFLFIYCLVLLAFANGL). Residues 535–599 (NQLYFYYEET…HEFTDFVGAT (65 aa)) lie on the Extracellular side of the membrane. Cysteines 549 and 554 form a disulfide. Residues 600 to 620 (MFGTYNVISLVVLLNMLIAMM) traverse the membrane as a helical segment. Residues 615 to 977 (MLIAMMNNSY…AHEDYVTTRL (363 aa)) are interaction with ITPR1, ITPR2 and ITPR3. At 621–977 (NNSYQLIADH…AHEDYVTTRL (357 aa)) the chain is on the cytoplasmic side. Residues 767–790 (AASSASSADSDEKSHSEGNGKDKR) are disordered. The segment covering 776–787 (SDEKSHSEGNGK) has biased composition (basic and acidic residues). Residues tyrosine 959 and tyrosine 972 each carry the phosphotyrosine; by FYN modification. The interval 975–977 (TRL) is PDZ-binding domain.

This sequence belongs to the transient receptor (TC 1.A.4) family. STrpC subfamily. TRPC4 sub-subfamily. As to quaternary structure, homotetramer. Heterotetramer with TRPC1 and/or TRPC5. Forms a heteromeric ion channel with TRPC1, with a 1:3 TRPC1:TRPC4 stoichiometry. Interacts with TRPC4AP. Isoform alpha but not isoform beta interacts with ITPR1, ITPR2 and ITPR3. Interacts with NHERF1. Interacts with MX1 and RNF24. Interacts (via CIRB domain) with SESTD1 (via the spectrin 1 repeat) and SPTBN5 (via C-terminus). Interacts with CDH5 and CTNNB1. Interacts (via protein 4.1-binding domain) with EPB41L2. Interacts with PLSCR1.

It localises to the cell membrane. It catalyses the reaction Ca(2+)(in) = Ca(2+)(out). The catalysed reaction is Na(+)(in) = Na(+)(out). The enzyme catalyses Li(+)(in) = Li(+)(out). It carries out the reaction Cs(+)(in) = Cs(+)(out). May be operated by a phosphatidylinositol second messenger system activated by receptor tyrosine kinases or G-protein coupled receptors. May be activated by intracellular calcium store depletion. Its function is as follows. Forms a receptor-activated non-selective calcium permeant cation channel. Acts as a cell-cell contact-dependent endothelial calcium entry channel. Forms a homomeric ion channel or a heteromeric ion channel with TRPC1; the heteromeric ion channel has reduced calcium permeability compared to the homomeric channel. Also permeable to monovalent ions including sodium, lithium and cesium ions. In terms of biological role, forms a non-selective a receptor-activated calcium permeant cation channel. Probably is operated by a phosphatidylinositol second messenger system activated by receptor tyrosine kinases or G-protein coupled receptors. The polypeptide is Short transient receptor potential channel 4 (Trpc4) (Rattus norvegicus (Rat)).